The sequence spans 485 residues: Cobyric acid synthase (485 aa).

The region spanning 250 to 436 (RVLVACPILP…VHGLLANADL (187 aa)) is the GATase cobBQ-type domain. The Nucleophile role is filled by Cys332. His428 is a catalytic residue.

Belongs to the CobB/CobQ family. CobQ subfamily.

It participates in cofactor biosynthesis; adenosylcobalamin biosynthesis. In terms of biological role, catalyzes amidations at positions B, D, E, and G on adenosylcobyrinic A,C-diamide. NH(2) groups are provided by glutamine, and one molecule of ATP is hydrogenolyzed for each amidation. The chain is Cobyric acid synthase from Rhizorhabdus wittichii (strain DSM 6014 / CCUG 31198 / JCM 15750 / NBRC 105917 / EY 4224 / RW1) (Sphingomonas wittichii).